The chain runs to 449 residues: C4-dicarboxylate transport protein 1 (449 aa).

The next 8 membrane-spanning stretches (helical) occupy residues 16–38, 53–71, 84–106, 157–176, 197–219, 229–251, 311–333, and 358–380; these read FLQV…DLAV, MLIA…SGAG, VIYF…YSLG, ILQV…LVGE, GMIV…ARYG, LVLV…VLRL, GFSI…PLAM, and LVIL…VLVL.

This sequence belongs to the dicarboxylate/amino acid:cation symporter (DAACS) (TC 2.A.23) family.

Its subcellular location is the cell inner membrane. Its function is as follows. Responsible for the transport of dicarboxylates such as succinate, fumarate, and malate from the periplasm across the membrane. The protein is C4-dicarboxylate transport protein 1 (dctA1) of Pseudomonas aeruginosa (strain ATCC 15692 / DSM 22644 / CIP 104116 / JCM 14847 / LMG 12228 / 1C / PRS 101 / PAO1).